The following is a 728-amino-acid chain: Phosphoribosylformylglycinamidine synthase subunit PurL (728 aa).

H54 is an active-site residue. Y57 and K96 together coordinate ATP. E98 is a binding site for Mg(2+). Substrate is bound by residues 99 to 102 and R121; that span reads SHNH. H100 serves as the catalytic Proton acceptor. Residue D122 participates in Mg(2+) binding. Q245 is a binding site for substrate. D273 is a Mg(2+) binding site. Position 317 to 319 (317 to 319) interacts with substrate; that stretch reads ETQ. ATP is bound by residues D495 and G532. Residue N533 coordinates Mg(2+). Residue S535 coordinates substrate.

It belongs to the FGAMS family. In terms of assembly, monomer. Part of the FGAM synthase complex composed of 1 PurL, 1 PurQ and 2 PurS subunits.

The protein resides in the cytoplasm. It catalyses the reaction N(2)-formyl-N(1)-(5-phospho-beta-D-ribosyl)glycinamide + L-glutamine + ATP + H2O = 2-formamido-N(1)-(5-O-phospho-beta-D-ribosyl)acetamidine + L-glutamate + ADP + phosphate + H(+). It functions in the pathway purine metabolism; IMP biosynthesis via de novo pathway; 5-amino-1-(5-phospho-D-ribosyl)imidazole from N(2)-formyl-N(1)-(5-phospho-D-ribosyl)glycinamide: step 1/2. In terms of biological role, part of the phosphoribosylformylglycinamidine synthase complex involved in the purines biosynthetic pathway. Catalyzes the ATP-dependent conversion of formylglycinamide ribonucleotide (FGAR) and glutamine to yield formylglycinamidine ribonucleotide (FGAM) and glutamate. The FGAM synthase complex is composed of three subunits. PurQ produces an ammonia molecule by converting glutamine to glutamate. PurL transfers the ammonia molecule to FGAR to form FGAM in an ATP-dependent manner. PurS interacts with PurQ and PurL and is thought to assist in the transfer of the ammonia molecule from PurQ to PurL. This chain is Phosphoribosylformylglycinamidine synthase subunit PurL, found in Macrococcus caseolyticus (strain JCSC5402) (Macrococcoides caseolyticum).